The chain runs to 311 residues: Aspartate carbamoyltransferase catalytic subunit (311 aa).

2 residues coordinate carbamoyl phosphate: Arg-55 and Thr-56. Lys-85 contributes to the L-aspartate binding site. Carbamoyl phosphate is bound by residues Arg-106, His-135, and Gln-138. L-aspartate is bound by residues Arg-168 and Arg-230. Leu-268 and Pro-269 together coordinate carbamoyl phosphate.

Belongs to the aspartate/ornithine carbamoyltransferase superfamily. ATCase family. As to quaternary structure, heterododecamer (2C3:3R2) of six catalytic PyrB chains organized as two trimers (C3), and six regulatory PyrI chains organized as three dimers (R2).

The enzyme catalyses carbamoyl phosphate + L-aspartate = N-carbamoyl-L-aspartate + phosphate + H(+). The protein operates within pyrimidine metabolism; UMP biosynthesis via de novo pathway; (S)-dihydroorotate from bicarbonate: step 2/3. Its function is as follows. Catalyzes the condensation of carbamoyl phosphate and aspartate to form carbamoyl aspartate and inorganic phosphate, the committed step in the de novo pyrimidine nucleotide biosynthesis pathway. The protein is Aspartate carbamoyltransferase catalytic subunit of Buchnera aphidicola subsp. Schizaphis graminum (strain Sg).